A 62-amino-acid polypeptide reads, in one-letter code: Chromatin protein Cren7 (62 aa).

It belongs to the Cren7 family. Monomer. Methylated at multiple sites, to varying extents.

Its subcellular location is the chromosome. The protein localises to the cytoplasm. Its function is as follows. A chromatin protein, binds double-stranded DNA without sequence specificity. Constrains negative DNA supercoils. This is Chromatin protein Cren7 from Staphylothermus marinus (strain ATCC 43588 / DSM 3639 / JCM 9404 / F1).